The chain runs to 894 residues: Kinesin-like protein KIN-UB (894 aa).

A disordered region spans residues 1–53 (MAMASSRNGAVRGSMRPVSGANSSNLRSSSFKSRIPSSAPAPRRSSSASIGAA). Over residues 19 to 50 (SGANSSNLRSSSFKSRIPSSAPAPRRSSSASI) the composition is skewed to low complexity. Residues 60-402 (RVRVAVRLRP…ILFGQRAMKV (343 aa)) enclose the Kinesin motor domain. 145–152 (GQTGTGKT) contributes to the ATP binding site. A D-BOX motif is present at residues 372–380 (RTSLIVTIG). Residues 423 to 588 (VQLDKVIAEN…RSQLVQLTFE (166 aa)) adopt a coiled-coil conformation. Disordered stretches follow at residues 530 to 550 (EEEVSKVKSQSTLKTRSGEGE) and 598 to 623 (RGAPGNSYSGTDSLPSRHSQARESVN). Residues 603 to 623 (NSYSGTDSLPSRHSQARESVN) show a composition bias toward polar residues. ARM repeat units follow at residues 626-665 (KAPFATLCEQVGLQKILQLLESDDANIRIHAVKVVANLAA), 667-707 (EANQ…NLAM), 709-749 (EVSQ…NLCG), and 751-790 (DKLQARLWSDGGIKALLGMVRCGHPDVLAQVARGIANFAK).

This sequence belongs to the TRAFAC class myosin-kinesin ATPase superfamily. Kinesin family. Ungrouped subfamily. In terms of assembly, interacts (via C-terminus) with NEK5. As to expression, expressed in the basal regions and petioles of immature leaves and in the root elongation zone.

The protein localises to the cytoplasm. Its subcellular location is the cytoskeleton. Its function is as follows. Involved in the control of epidermal-cell morphogenesis in roots and helical growth of roots by promoting microtubule depolymerization and limiting the accumulation of endoplasmic microtubules. Seems to be involved in the control of cell-file rotation (or twisting). The chain is Kinesin-like protein KIN-UB from Arabidopsis thaliana (Mouse-ear cress).